The following is a 62-amino-acid chain: Defensin BmKDfsin4 (62 aa).

The first 24 residues, 1 to 24 (MKTIVLLFVLALVFCTLEMGIVEA), serve as a signal peptide directing secretion. 3 disulfide bridges follow: Cys-28/Cys-49, Cys-35/Cys-57, and Cys-39/Cys-59.

The protein belongs to the invertebrate defensin family. Type 2 subfamily.

Its subcellular location is the secreted. In terms of biological role, dual-function peptide with antimicrobial and potassium channel-blocking activities. Shows inhibitory activity against Gram-positive bacteria such as S.aureus, B.subtilis, and M.luteus as well as methicillin-resistant S.aureus (MIC=0.1-20 uM). Does not act on bacteria by disrupting membranes. Also moderately inhibits Kv1.1/KCNA1 (25.2% inhibition at 1 uM), Kv1.2/KCNA2 (30.5% inhibition at 1 uM), and Kv1.3/KCNA3 potassium channels (IC(50)=510.2 nM, 61% inhibition at 1 uM). Inhibits potassium channels by interacting with the pore region. Does not show hemolytic activity. In vitro, dose-dependently decreases the production of Hepatitis B virus (HBV) DNA and HBV viral proteins in both culture medium and cell lysate. The chain is Defensin BmKDfsin4 from Olivierus martensii (Manchurian scorpion).